Reading from the N-terminus, the 171-residue chain is Dual specificity protein phosphatase OPG106 (171 aa).

Residues 1-27 are dimerization; sequence MDKKSLYKYLLLRSTGDMHKAKSPTIM. In terms of domain architecture, Tyrosine-protein phosphatase spans 23–171; sequence SPTIMTRVTN…IIEKYVIDKN (149 aa). Cysteine 110 functions as the Phosphocysteine intermediate in the catalytic mechanism.

It belongs to the protein-tyrosine phosphatase family. Non-receptor class dual specificity subfamily. Homodimer.

Its subcellular location is the virion. It is found in the host cytoplasm. The enzyme catalyses O-phospho-L-tyrosyl-[protein] + H2O = L-tyrosyl-[protein] + phosphate. The catalysed reaction is O-phospho-L-seryl-[protein] + H2O = L-seryl-[protein] + phosphate. Its function is as follows. Serine/tyrosine phosphatase which down-regulates cellular antiviral response by dephosphorylating activated host STAT1 and blocking interferon (IFN)-stimulated innate immune responses. Dephosphorylates the OPG144 protein. This Bos taurus (Bovine) protein is Dual specificity protein phosphatase OPG106 (OPG106).